Reading from the N-terminus, the 612-residue chain is Dihydroxy-acid dehydratase (612 aa).

Asp81 contributes to the Mg(2+) binding site. Cys122 lines the [2Fe-2S] cluster pocket. Asp123 and Lys124 together coordinate Mg(2+). Position 124 is an N6-carboxylysine (Lys124). Cys195 is a binding site for [2Fe-2S] cluster. Glu491 is a binding site for Mg(2+). Ser517 serves as the catalytic Proton acceptor.

Belongs to the IlvD/Edd family. Homodimer. [2Fe-2S] cluster is required as a cofactor. Requires Mg(2+) as cofactor.

It carries out the reaction (2R)-2,3-dihydroxy-3-methylbutanoate = 3-methyl-2-oxobutanoate + H2O. It catalyses the reaction (2R,3R)-2,3-dihydroxy-3-methylpentanoate = (S)-3-methyl-2-oxopentanoate + H2O. The protein operates within amino-acid biosynthesis; L-isoleucine biosynthesis; L-isoleucine from 2-oxobutanoate: step 3/4. It participates in amino-acid biosynthesis; L-valine biosynthesis; L-valine from pyruvate: step 3/4. Functionally, functions in the biosynthesis of branched-chain amino acids. Catalyzes the dehydration of (2R,3R)-2,3-dihydroxy-3-methylpentanoate (2,3-dihydroxy-3-methylvalerate) into 2-oxo-3-methylpentanoate (2-oxo-3-methylvalerate) and of (2R)-2,3-dihydroxy-3-methylbutanoate (2,3-dihydroxyisovalerate) into 2-oxo-3-methylbutanoate (2-oxoisovalerate), the penultimate precursor to L-isoleucine and L-valine, respectively. The polypeptide is Dihydroxy-acid dehydratase (Sinorhizobium medicae (strain WSM419) (Ensifer medicae)).